The primary structure comprises 113 residues: Ig kappa chain V-II region 17S29.1 (113 aa).

The segment at 1–23 is framework-1; sequence DIVMTQAVFSNPVTLGTSASISC. Cys23 and Cys93 are joined by a disulfide. The interval 24–39 is complementarity-determining-1; that stretch reads RSSKSLLHSNGITYLY. The framework-2 stretch occupies residues 40 to 54; that stretch reads WYLQKPGQSPQLLLY. Positions 55 to 61 are complementarity-determining-2; that stretch reads QMSNLAS. Residues 62–93 form a framework-3 region; sequence GVPDRFSSSGSGTDFTLRISRVEAEDVGVYYC. Residues 94–102 form a complementarity-determining-3 region; that stretch reads AHNLELPYT. Residues 103–112 form a framework-4 region; sequence FGGGTKLEIK.

Anti-streptococcal group A carbohydrate antibody. The protein is Ig kappa chain V-II region 17S29.1 of Mus musculus (Mouse).